The sequence spans 335 residues: MFLTILAGLIAFAVTALAMPHFIRLYQLKKIGGQQMHEDVKQHLAKAGTPTMGGTVFLLVATSLSFVFALVYFRDGQSLGLISGILLIVLIYGIIGFLDDFLKIFKQVNEGLTAKQKFTFQIVGGLVFYVIHVMPSGIDAINVFGYHWHLGFLYLCFVLFWVVGFSNAVNLTDGIDGLASVSVVISLLAYGVIAYAQGQFDVLLLIGIMVGALLAFFLFNHKPAKIFMGDVGSLALGAMLAAISIALRQEWTLLVIGIVYVLETSSVMLQVTYFKYTKKKYGEGRRIFRMTPFHHHLELGGLSGKAAKWSEWKVDAFLWALGLVASLIVLAILYL.

Helical transmembrane passes span 3-23 (LTIL…PHFI), 53-73 (GGTV…LVYF), 78-98 (SLGL…IGFL), 118-138 (FTFQ…PSGI), 143-163 (VFGY…FWVV), 174-194 (GIDG…GVIA), 200-220 (FDVL…FLFN), 226-246 (IFMG…ISIA), 251-271 (WTLL…MLQV), and 314-334 (VDAF…AILY).

Belongs to the glycosyltransferase 4 family. MraY subfamily. It depends on Mg(2+) as a cofactor.

Its subcellular location is the cell membrane. It carries out the reaction UDP-N-acetyl-alpha-D-muramoyl-L-alanyl-gamma-D-glutamyl-L-lysyl-D-alanyl-D-alanine + di-trans,octa-cis-undecaprenyl phosphate = Mur2Ac(oyl-L-Ala-gamma-D-Glu-L-Lys-D-Ala-D-Ala)-di-trans,octa-cis-undecaprenyl diphosphate + UMP. The protein operates within cell wall biogenesis; peptidoglycan biosynthesis. Its function is as follows. Catalyzes the initial step of the lipid cycle reactions in the biosynthesis of the cell wall peptidoglycan: transfers peptidoglycan precursor phospho-MurNAc-pentapeptide from UDP-MurNAc-pentapeptide onto the lipid carrier undecaprenyl phosphate, yielding undecaprenyl-pyrophosphoryl-MurNAc-pentapeptide, known as lipid I. This Streptococcus equi subsp. equi (strain 4047) protein is Phospho-N-acetylmuramoyl-pentapeptide-transferase.